Reading from the N-terminus, the 100-residue chain is NADH-quinone oxidoreductase subunit K (100 aa).

3 consecutive transmembrane segments (helical) span residues 4–24 (LTHG…GLVI), 28–48 (LLFM…AFVV), and 60–80 (VMYI…LALL).

It belongs to the complex I subunit 4L family. In terms of assembly, NDH-1 is composed of 13 different subunits. Subunits NuoA, H, J, K, L, M, N constitute the membrane sector of the complex.

It localises to the cell inner membrane. It catalyses the reaction a quinone + NADH + 5 H(+)(in) = a quinol + NAD(+) + 4 H(+)(out). Functionally, NDH-1 shuttles electrons from NADH, via FMN and iron-sulfur (Fe-S) centers, to quinones in the respiratory chain. The immediate electron acceptor for the enzyme in this species is believed to be ubiquinone. Couples the redox reaction to proton translocation (for every two electrons transferred, four hydrogen ions are translocated across the cytoplasmic membrane), and thus conserves the redox energy in a proton gradient. The polypeptide is NADH-quinone oxidoreductase subunit K (Enterobacter sp. (strain 638)).